A 232-amino-acid chain; its full sequence is Orotidine 5'-phosphate decarboxylase (232 aa).

Substrate contacts are provided by residues Asp-13, Lys-35, 62–71, Thr-121, Arg-182, Gln-191, Gly-211, and Arg-212; that span reads DLKFHDIPNT. Lys-64 (proton donor) is an active-site residue.

The protein belongs to the OMP decarboxylase family. Type 1 subfamily. In terms of assembly, homodimer.

It carries out the reaction orotidine 5'-phosphate + H(+) = UMP + CO2. It functions in the pathway pyrimidine metabolism; UMP biosynthesis via de novo pathway; UMP from orotate: step 2/2. Functionally, catalyzes the decarboxylation of orotidine 5'-monophosphate (OMP) to uridine 5'-monophosphate (UMP). The chain is Orotidine 5'-phosphate decarboxylase from Acinetobacter baumannii (strain AB0057).